The following is a 469-amino-acid chain: Solute carrier family 52, riboflavin transporter, member 3 (469 aa).

Over 1–2 the chain is Cytoplasmic; sequence MA. The helical transmembrane segment at 3–23 threads the bilayer; sequence FLMHLLVCVFGMGSWVTINGL. The Extracellular portion of the chain corresponds to 24-43; sequence WVELPLLVMELPEGWYLPSY. Residues 44 to 64 traverse the membrane as a helical segment; it reads LTVVIQLANIGPLLVTLLHHF. Residues 65 to 71 are Cytoplasmic-facing; that stretch reads RPSCLSE. Residues 72–92 traverse the membrane as a helical segment; that stretch reads VPIIFTLLGVGTVTCIIFAFL. The Extracellular segment spans residues 93-97; the sequence is WNMTS. A glycan (N-linked (GlcNAc...) asparagine) is linked at Asn-94. Residues 98-118 traverse the membrane as a helical segment; that stretch reads WVLDGHHSIAFLVLTFFLALV. Over 119–137 the chain is Cytoplasmic; sequence DCTSSVTFLPFMSRLPTYY. A helical membrane pass occupies residues 138-158; that stretch reads LTTFFVGEGLSGLLPALVALA. The Extracellular portion of the chain corresponds to 159–220; it reads QGSGLTTCVN…SRYLPAHFSP (62 aa). Asn-168 is a glycosylation site (N-linked (GlcNAc...) asparagine). A helical transmembrane segment spans residues 221–241; that stretch reads LVFFLLLSIMMACCLVAFFVL. At 242-292 the chain is on the cytoplasmic side; it reads QRQPRCWEASVEDLLNDQVTLHSIRPREENDLGPAGTVDSSQGQGYLEEKA. Ser-251 carries the phosphoserine modification. Residues 293–313 form a helical membrane-spanning segment; it reads APCCPAHLAFIYTLVAFVNAL. Residues 314-335 are Extracellular-facing; it reads TNGMLPSVQTYSCLSYGPVAYH. The helical transmembrane segment at 336–356 threads the bilayer; sequence LAATLSIVANPLASLVSMFLP. Residues 357-359 are Cytoplasmic-facing; it reads NRS. The helical transmembrane segment at 360–380 threads the bilayer; it reads LLFLGVLSVLGTCFGGYNMAM. Residues 381–396 lie on the Extracellular side of the membrane; that stretch reads AVMSPCPLLQGHWGGE. Residues Cys-386 and Cys-463 are joined by a disulfide bond. Residues 397–417 traverse the membrane as a helical segment; it reads VLIVASWVLFSGCLSYVKVML. Over 418-427 the chain is Cytoplasmic; that stretch reads GVVLRDLSRS. A helical membrane pass occupies residues 428-448; sequence ALLWCGAAVQLGSLLGALLMF. Topologically, residues 449-469 are extracellular; it reads PLVNVLRLFSSADFCNLHCPA.

This sequence belongs to the riboflavin transporter family. Predominantly expressed in testis. Highly expressed in small intestine and prostate.

Its subcellular location is the apical cell membrane. It localises to the cell membrane. The protein localises to the nucleus membrane. The protein resides in the cytoplasm. The catalysed reaction is riboflavin(in) = riboflavin(out). Activity is strongly inhibited by riboflavin analogs, such as lumiflavin, flavin mononucleotide (FMN), flavin adenine dinucleotide (FAD), by methylene blue, and to a lesser extent by amiloride. Riboflavin transport is Na(+)-independent at low pH but significantly reduced by Na(+) depletion under neutral pH conditions. Functionally, plasma membrane transporter mediating the uptake by cells of the water soluble vitamin B2/riboflavin that plays a key role in biochemical oxidation-reduction reactions of the carbohydrate, lipid, and amino acid metabolism. Humans are unable to synthesize vitamin B2/riboflavin and must obtain it via intestinal absorption. The chain is Solute carrier family 52, riboflavin transporter, member 3 (SLC52A3) from Homo sapiens (Human).